A 152-amino-acid polypeptide reads, in one-letter code: VQ motif-containing protein 8, chloroplastic (152 aa).

The disordered stretch occupies residues 1-42 (MIPTRCNEINGSRPSSLKLAGESHTIKKTSSCKSKPRPHGRA). The transit peptide at 1 to 58 (MIPTRCNEINGSRPSSLKLAGESHTIKKTSSCKSKPRPHGRASPVIIYAHSPKVIHTR) directs the protein to the chloroplast. The VQ motif lies at 62-71 (FMALVQRLTG). Residues 80-108 (TSESSSSVVTEEVNVGDDNTAAPFSQDRT) are disordered. Residues 81 to 92 (SESSSSVVTEEV) show a composition bias toward low complexity.

The protein resides in the plastid. Its subcellular location is the chloroplast. Its function is as follows. May be involved in chloroplast development. In Arabidopsis thaliana (Mouse-ear cress), this protein is VQ motif-containing protein 8, chloroplastic.